The chain runs to 1265 residues: Cohesin subunit SA-1 (1265 aa).

The span at 1–16 (MITSELSVLQDSTNES) shows a compositional bias: polar residues. Disordered stretches follow at residues 1-21 (MITSELSVLQDSTNESAVMHT) and 37-91 (DLEV…EGDP). The segment covering 62–73 (TPGDRSRAEPGS) has biased composition (basic and acidic residues). In terms of domain architecture, SCD spans 303-388 (FVHRYRDAIA…NRFKDRIVSM (86 aa)). Disordered stretches follow at residues 1063-1097 (GDEDRLSVNSGGSNSKGSSVRSKKGRPPLHKKRVI) and 1111-1130 (DTIQTPGALTTPQLTSTVLR). The segment covering 1069 to 1082 (SVNSGGSNSKGSSV) has biased composition (low complexity). Residues 1083-1095 (RSKKGRPPLHKKR) show a composition bias toward basic residues. The span at 1111–1129 (DTIQTPGALTTPQLTSTVL) shows a compositional bias: polar residues.

Belongs to the SCC3 family. Interacts directly with RAD21 in cohesin complex. Cohesin complexes are composed of a heterodimer between and SMC3, which are attached via their hinge domain, and RAD21 which link them at their heads, and one STAG protein (STAG1 OR STAG2). In cohesin complexes, STAG1 is mutually exclusive with STAG2. Post-translationally, phosphorylated by PLK1. The large dissociation of cohesin from chromosome arms during prophase is partly due to its phosphorylation.

Its subcellular location is the nucleus. The protein localises to the chromosome. The protein resides in the centromere. In terms of biological role, component of cohesin complex, a complex required for the cohesion of sister chromatids after DNA replication. The cohesin complex apparently forms a large proteinaceous ring within which sister chromatids can be trapped. At anaphase, the complex is cleaved and dissociates from chromatin, allowing sister chromatids to segregate. The cohesin complex may also play a role in spindle pole assembly during mitosis. The polypeptide is Cohesin subunit SA-1 (stag1) (Xenopus laevis (African clawed frog)).